Here is an 84-residue protein sequence, read N- to C-terminus: Putative defensin-like protein 114 (84 aa).

Residues 1-24 (MAITKKCFAAFVLILLFVMPFVYC) form the signal peptide. Intrachain disulfides connect C41–C81, C47–C69, C54–C79, and C58–C80.

Belongs to the DEFL family.

Its subcellular location is the secreted. The protein is Putative defensin-like protein 114 of Arabidopsis thaliana (Mouse-ear cress).